The sequence spans 326 residues: MSVTPIVEVKHLEKEFGFWRKNRILKDVNFAIMPGEFHAFIGQNGAGKTTTIKCLISSYQRFKDEINIDGISNKNAKSKGVISYIPEYAVFPKHLNTHEYLYTLGKLSGCSLQTIKEKVDYWLARFQIEHLRFKKPNDFSSGQKKKVLLIQALFNDPKLLIMDEPTANLDPKTRNEFMDVCYELNVRNKMAVFVSSHILAELENYCDSLTVIHEGEILFNGKTKNIAKDNFGYRLKVNNSDSLRKWLKAQKIAYKYFPATDDFQVDLKQKQSNKFAVELYQQPDFEVFIFARQGNSLQNIYNNLIEQYEYDQVQRAVAIREQDEAV.

Positions Val7–Asn239 constitute an ABC transporter domain. Residue Gly42–Thr49 coordinates ATP.

It belongs to the ABC transporter superfamily.

The chain is Putative ABC transporter ATP-binding protein MPN_334 from Mycoplasma pneumoniae (strain ATCC 29342 / M129 / Subtype 1) (Mycoplasmoides pneumoniae).